The primary structure comprises 66 residues: Muscarinic toxin 4 (66 aa).

4 disulfides stabilise this stretch: C3–C24, C17–C42, C46–C58, and C59–C64.

It belongs to the three-finger toxin family. Short-chain subfamily. Aminergic toxin sub-subfamily. In terms of assembly, monomer. In terms of tissue distribution, expressed by the venom gland.

It is found in the secreted. In terms of biological role, binds to the muscarinic acetylcholine receptor (CHRM). This Dendroaspis angusticeps (Eastern green mamba) protein is Muscarinic toxin 4.